The sequence spans 918 residues: Bromodomain testis-specific protein (918 aa).

The disordered stretch occupies residues 1-26; that stretch reads MSDVKPPQHFTMNGNPPPPEFKNPKK. The region spanning 29–135 is the Bromo 1 domain; that stretch reads RLTNHLQYIE…KLFLEKVAEM (107 aa). The Nuclear localization signal signature appears at 204-215; the sequence is NGVKRKADTTTP. Disordered stretches follow at residues 241–267, 379–430, 575–712, 738–764, and 862–899; these read RGSG…GRRT, EPKN…RAHR, KNKP…SLVS, IPPL…SSSQ, and DTPK…AMSG. The Bromo 2 domain occupies 267 to 376; sequence TKLSERLKYC…DVFEFRFSKI (110 aa). Over residues 399–416 the composition is skewed to low complexity; it reads SPSSSESSDSESSSPENS. Positions 426 to 452 form a coiled coil; sequence ERAHRLASLEEQQLKAVREQLQLLTQT. In terms of domain architecture, NET spans 496–578; the sequence is DSEEEMNTLP…GCLRKKKNKP (83 aa). Over residues 575–584 the composition is skewed to basic residues; it reads KNKPPKKSKI. The segment covering 605-617 has biased composition (basic and acidic residues); it reads KIETDGEIKDTTH. Composition is skewed to low complexity over residues 622-648 and 739-764; these read SDSS…DSDS and PPLL…SSSQ. Positions 815–902 form a coiled coil; that stretch reads EKELTTASRG…RREAMSGVID (88 aa). A compositionally biased stretch (basic and acidic residues) spans 877 to 896; sequence VDREREMARKREQERRRREA.

It belongs to the BET family.

It is found in the nucleus. Functionally, testis-specific chromatin protein that specifically binds histone H4 acetylated at 'Lys-5' and 'Lys-8' (H4K5ac and H4K8ac, respectively) and plays a key role in spermatogenesis. Required in late pachytene spermatocytes: plays a role in meiotic and post-meiotic cells by binding to acetylated histones at the promoter of specific meiotic and post-meiotic genes, facilitating their activation at the appropriate time. In the post-meiotic phase of spermatogenesis, binds to hyperacetylated histones and participates in their general removal from DNA. Also recognizes and binds a subset of butyrylated histones: able to bind histone H4 butyrylated at 'Lys-8' (H4K8ac), while it is not able to bind H4 butyrylated at 'Lys-5' (H4K5ac). This Danio rerio (Zebrafish) protein is Bromodomain testis-specific protein (brdt).